The sequence spans 493 residues: ATP synthase subunit beta, chloroplastic (493 aa).

170–177 (GGAGVGKT) contacts ATP.

This sequence belongs to the ATPase alpha/beta chains family. F-type ATPases have 2 components, CF(1) - the catalytic core - and CF(0) - the membrane proton channel. CF(1) has five subunits: alpha(3), beta(3), gamma(1), delta(1), epsilon(1). CF(0) has four main subunits: a(1), b(1), b'(1) and c(9-12).

Its subcellular location is the plastid. The protein localises to the chloroplast thylakoid membrane. The enzyme catalyses ATP + H2O + 4 H(+)(in) = ADP + phosphate + 5 H(+)(out). Its function is as follows. Produces ATP from ADP in the presence of a proton gradient across the membrane. The catalytic sites are hosted primarily by the beta subunits. This Staurastrum punctulatum (Green alga) protein is ATP synthase subunit beta, chloroplastic.